The following is a 61-amino-acid chain: Small ribosomal subunit protein uS14 (61 aa).

Positions 24, 27, 40, and 43 each coordinate Zn(2+).

Belongs to the universal ribosomal protein uS14 family. Zinc-binding uS14 subfamily. As to quaternary structure, part of the 30S ribosomal subunit. Contacts proteins S3 and S10. It depends on Zn(2+) as a cofactor.

Its function is as follows. Binds 16S rRNA, required for the assembly of 30S particles and may also be responsible for determining the conformation of the 16S rRNA at the A site. This chain is Small ribosomal subunit protein uS14, found in Acidithiobacillus ferrooxidans (strain ATCC 23270 / DSM 14882 / CIP 104768 / NCIMB 8455) (Ferrobacillus ferrooxidans (strain ATCC 23270)).